Consider the following 122-residue polypeptide: Large ribosomal subunit protein bL12 (122 aa).

It belongs to the bacterial ribosomal protein bL12 family. As to quaternary structure, homodimer. Part of the ribosomal stalk of the 50S ribosomal subunit. Forms a multimeric L10(L12)X complex, where L10 forms an elongated spine to which 2 to 4 L12 dimers bind in a sequential fashion. Binds GTP-bound translation factors.

Its function is as follows. Forms part of the ribosomal stalk which helps the ribosome interact with GTP-bound translation factors. Is thus essential for accurate translation. The polypeptide is Large ribosomal subunit protein bL12 (Aliivibrio fischeri (strain ATCC 700601 / ES114) (Vibrio fischeri)).